The chain runs to 552 residues: MSQFFFNQRTHLVSDVIDGAIIASPWNNLARLESDPAIRIVVRRDLNKNNVAVISGGGSGHEPAHVGFIGKGMLTAAVCGDVFASPSVDAVLTAIQAVTGEAGCLLIVKNYTGDRLNFGLAAEKARRLGYNVEMLIVGDDISLPDNKHPRGIAGTILVHKIAGYFAERGYNLATVLREAQYAASNTFSLGVALSSCHLPQETDAAPRHHPGHAELGMGIHGEPGASVIDTQNSAQVVNLMVDKLLAALPETGRLAVMINNLGGVSVAEMAIITRELASSPLHSRIDWLIGPASLVTALDMKGFSLTAIVLEESIEKALLTEVETSNWPTPVPPREITCVVSSHASARVEFQPSANALVAGIVELVTATLSDLETHLNALDAKVGDGDTGSTFAAAAREIASLLHRQQLPLNNLATLFALIGERLTVVMGGSSGVLMSIFFTAAGQKLEQGANVVEALNTGLAQMKFYGGADEGDRTMIDALQPALTSLLAQPKNLQAAFDAAQAGAERTCLSSKANAGRASYLSSESLLGNMDPGAQRLAMVFKALAESELG.

Residues 8–327 enclose the DhaK domain; the sequence is QRTHLVSDVI…LLTEVETSNW (320 aa). Substrate is bound by residues 58-61, K109, and D114; that span reads GSGH. H220 functions as the Tele-hemiaminal-histidine intermediate in the catalytic mechanism. The DhaL domain occupies 356–548; it reads ALVAGIVELV…LAMVFKALAE (193 aa). ATP-binding positions include 385-388, 431-432, G468, 476-477, and 533-535; these read DGDT, SS, TM, and DPG.

In terms of assembly, homodimer. It depends on Mg(2+) as a cofactor. Ca(2+) serves as cofactor.

The enzyme catalyses dihydroxyacetone + ATP = dihydroxyacetone phosphate + ADP + H(+). It functions in the pathway polyol metabolism; glycerol fermentation; glycerone phosphate from glycerol (oxidative route): step 2/2. Its function is as follows. Catalyzes the phosphorylation of dihydroxyacetone. The sequence is that of Dihydroxyacetone kinase (dhaK) from Citrobacter freundii.